A 598-amino-acid polypeptide reads, in one-letter code: Aspartate--tRNA(Asp/Asn) ligase (598 aa).

Residue Glu174 participates in L-aspartate binding. Positions 198 to 201 (QQLK) are aspartate. An L-aspartate-binding site is contributed by Arg220. ATP-binding positions include 220–222 (RDE) and Gln229. His458 is an L-aspartate binding site. Glu492 contributes to the ATP binding site. Position 499 (Arg499) interacts with L-aspartate. 544 to 547 (GIDR) lines the ATP pocket.

Belongs to the class-II aminoacyl-tRNA synthetase family. Type 1 subfamily. As to quaternary structure, homodimer.

The protein localises to the cytoplasm. The catalysed reaction is tRNA(Asx) + L-aspartate + ATP = L-aspartyl-tRNA(Asx) + AMP + diphosphate. Functionally, aspartyl-tRNA synthetase with relaxed tRNA specificity since it is able to aspartylate not only its cognate tRNA(Asp) but also tRNA(Asn). Reaction proceeds in two steps: L-aspartate is first activated by ATP to form Asp-AMP and then transferred to the acceptor end of tRNA(Asp/Asn). This chain is Aspartate--tRNA(Asp/Asn) ligase, found in Dehalococcoides mccartyi (strain ATCC BAA-2266 / KCTC 15142 / 195) (Dehalococcoides ethenogenes (strain 195)).